A 131-amino-acid polypeptide reads, in one-letter code: Holo-[acyl-carrier-protein] synthase (131 aa).

2 residues coordinate Mg(2+): aspartate 8 and glutamate 59.

This sequence belongs to the P-Pant transferase superfamily. AcpS family. It depends on Mg(2+) as a cofactor.

Its subcellular location is the cytoplasm. The catalysed reaction is apo-[ACP] + CoA = holo-[ACP] + adenosine 3',5'-bisphosphate + H(+). Its function is as follows. Transfers the 4'-phosphopantetheine moiety from coenzyme A to a Ser of acyl-carrier-protein. This Rickettsia africae (strain ESF-5) protein is Holo-[acyl-carrier-protein] synthase.